Here is a 238-residue protein sequence, read N- to C-terminus: N-acetylneuraminic acid outer membrane channel protein NanC (238 aa).

Positions 1–23 (MKKAKILSGVLLLCFSSPLISQA) are cleaved as a signal peptide. Residues 24–25 (AT) lie on the Periplasmic side of the membrane. A transmembrane span lies at residues 26-32 (LDVRGGY). Over 33–39 (RSGSHAY) the chain is Extracellular. Over 40–49 (ETRLKVSEGW) the chain traverses the membrane. At 50–52 (QNG) the chain is on the periplasmic side. A transmembrane helix spans residues 53–61 (WWASMESNT). Over 62-76 (WNTIHDNKKENAALN) the chain is Extracellular. Over 77-86 (DVQVEVNYAI) the chain traverses the membrane. Topologically, residues 87-91 (KLDDQ) are periplasmic. A transmembrane span lies at residues 92-102 (WTVRPGMLTHF). Residues 103 to 107 (SSNGT) are Extracellular-facing. At 108-117 (RYGPYVKLSW) the chain is embedded in the membrane. Residues 118–122 (DATKD) lie on the Periplasmic side of the membrane. Residues 123–132 (LKFGIRYRYD) are membrane-embedded. Topologically, residues 133–151 (WKAYRQQDLSGDMSRDNVH) are extracellular. A transmembrane span lies at residues 152 to 159 (RWDGYVTY). Residues 160–164 (HINSD) lie on the Periplasmic side of the membrane. The hydrophobic stretch at 165 to 173 (FTFAWQTTL) threads the membrane. Residues 174 to 190 (YSKQNDYRYANHKKWAT) lie on the Extracellular side of the membrane. A membrane pass occupies residues 191-200 (ENAFVLQYHM). Over 201-203 (TPD) the chain is Periplasmic. The segment at 204-212 (ITPYIEYDY) is a transmembrane helix. Over 213–228 (LDRQGVYNGRDNLSEN) the chain is Extracellular. A transmembrane span lies at residues 229–236 (SYRIGVSF). At 237–238 (KL) the chain is on the periplasmic side.

The protein belongs to the oligogalacturonate-specific porin KdgM (TC 1.B.35) family. NanC subfamily. In terms of assembly, monomer.

It localises to the cell outer membrane. The enzyme catalyses N-acetylneuraminate(in) = N-acetylneuraminate(out). Functionally, outer membrane channel protein allowing the entry of N-acetylneuraminic acid (Neu5Ac, the most abundant sialic acid on host cell surfaces) into the bacteria. NanC proteins form high-conductance channels which are open at low membrane potentials and which have a weak anion selectivity. The protein is N-acetylneuraminic acid outer membrane channel protein NanC (nanC) of Escherichia coli O6:H1 (strain CFT073 / ATCC 700928 / UPEC).